The following is a 276-amino-acid chain: Insulin-like growth factor-binding protein 2-A (276 aa).

The N-terminal stretch at 1–22 (MLSYVSCGLLLALVTFHGTARS) is a signal peptide. Residues 24 to 105 (MVFRCPSCTA…VQGLGRCGRK (82 aa)) enclose the IGFBP N-terminal domain. 9 disulfide bridges follow: Cys-28/Cys-55, Cys-31/Cys-57, Cys-39/Cys-58, Cys-46/Cys-61, Cys-69/Cys-82, Cys-76/Cys-102, Cys-180/Cys-214, Cys-225/Cys-236, and Cys-238/Cys-259. Residues 177–259 (QSQCQQELDQ…SPLIRGDPNC (83 aa)) form the Thyroglobulin type-1 domain. Positions 254–256 (RGD) match the Cell attachment site motif.

As to quaternary structure, interacts equally well with igf1 and igf2. In terms of tissue distribution, in embryos at 24 hpf, initially expressed in the lens and cranial region, and at 48 and 72 hpf in the brain boundary vasculature. Expression in these regions persists throughout the hatching period and by 96 hpf expression is most abundant in the liver. In both male and female adults, highest expression is in the liver with modest expression in the brain. In male but not females adults, expressed at a low level in muscle and gonad. Also expressed in the adult intestine.

The protein localises to the secreted. In terms of biological role, IGF-binding proteins prolong the half-life of the IGFs and have been shown to either inhibit or stimulate the growth promoting effects of the IGFs on cell culture. They alter the interaction of IGFs with their cell surface receptors. This chain is Insulin-like growth factor-binding protein 2-A (igfbp2a), found in Danio rerio (Zebrafish).